Here is a 483-residue protein sequence, read N- to C-terminus: Serine/threonine-protein kinase BSK4 (483 aa).

G2 carries N-myristoyl glycine lipidation. A Protein kinase domain is found at 56 to 322 (ENVVSEHGET…DTEVLSHVLM (267 aa)). Residues 62-70 (HGETAPNVV) and K84 contribute to the ATP site. Residue D178 is the Proton acceptor of the active site.

It belongs to the protein kinase superfamily. Ser/Thr protein kinase family.

It is found in the cell membrane. The catalysed reaction is L-seryl-[protein] + ATP = O-phospho-L-seryl-[protein] + ADP + H(+). The enzyme catalyses L-threonyl-[protein] + ATP = O-phospho-L-threonyl-[protein] + ADP + H(+). Its function is as follows. Probable serine/threonine kinase that acts as a positive regulator of brassinosteroid (BR) signaling downstream of the receptor kinase BRI1. Functions redundantly with BSK3, BSK6, BSK7 and BSK8. The polypeptide is Serine/threonine-protein kinase BSK4 (Arabidopsis thaliana (Mouse-ear cress)).